Reading from the N-terminus, the 260-residue chain is Late transcription factor 1 (260 aa).

Belongs to the chordopoxvirinae VLTF-1 family. Interacts with the late transcription factors VLTF-2 and VLTF-3. Interacts with the late transcription elongation factor H5/VLTF-4. Interacts with itself.

Associates with RNA polymerase to initiate transcription from late gene promoters. The protein is Late transcription factor 1 (VLTF1) of Vertebrata (FPV).